The following is a 252-amino-acid chain: Imidazole glycerol phosphate synthase subunit HisF (252 aa).

Catalysis depends on residues aspartate 11 and aspartate 130.

This sequence belongs to the HisA/HisF family. In terms of assembly, heterodimer of HisH and HisF.

The protein localises to the cytoplasm. It catalyses the reaction 5-[(5-phospho-1-deoxy-D-ribulos-1-ylimino)methylamino]-1-(5-phospho-beta-D-ribosyl)imidazole-4-carboxamide + L-glutamine = D-erythro-1-(imidazol-4-yl)glycerol 3-phosphate + 5-amino-1-(5-phospho-beta-D-ribosyl)imidazole-4-carboxamide + L-glutamate + H(+). It participates in amino-acid biosynthesis; L-histidine biosynthesis; L-histidine from 5-phospho-alpha-D-ribose 1-diphosphate: step 5/9. Functionally, IGPS catalyzes the conversion of PRFAR and glutamine to IGP, AICAR and glutamate. The HisF subunit catalyzes the cyclization activity that produces IGP and AICAR from PRFAR using the ammonia provided by the HisH subunit. The sequence is that of Imidazole glycerol phosphate synthase subunit HisF from Thermococcus kodakarensis (strain ATCC BAA-918 / JCM 12380 / KOD1) (Pyrococcus kodakaraensis (strain KOD1)).